A 512-amino-acid polypeptide reads, in one-letter code: Glycerol kinase 2 (512 aa).

Thr18 contributes to the ADP binding site. Residues Thr18, Thr19, and Ser20 each coordinate ATP. Position 18 (Thr18) interacts with sn-glycerol 3-phosphate. Residue Arg22 coordinates ADP. 4 residues coordinate sn-glycerol 3-phosphate: Arg88, Glu89, Tyr140, and Asp255. Positions 88, 89, 140, 255, and 256 each coordinate glycerol. Thr277 and Gly321 together coordinate ADP. Thr277, Gly321, Gln325, and Gly422 together coordinate ATP. 2 residues coordinate ADP: Gly422 and Asn426.

It belongs to the FGGY kinase family.

The enzyme catalyses glycerol + ATP = sn-glycerol 3-phosphate + ADP + H(+). Its pathway is polyol metabolism; glycerol degradation via glycerol kinase pathway; sn-glycerol 3-phosphate from glycerol: step 1/1. Its activity is regulated as follows. Inhibited by fructose 1,6-bisphosphate (FBP). Its function is as follows. Key enzyme in the regulation of glycerol uptake and metabolism. Catalyzes the phosphorylation of glycerol to yield sn-glycerol 3-phosphate. This Streptomyces coelicolor (strain ATCC BAA-471 / A3(2) / M145) protein is Glycerol kinase 2.